The primary structure comprises 229 residues: DNA mismatch repair protein MutH (229 aa).

Belongs to the MutH family.

Its subcellular location is the cytoplasm. In terms of biological role, sequence-specific endonuclease that cleaves unmethylated GATC sequences. It is involved in DNA mismatch repair. The chain is DNA mismatch repair protein MutH from Escherichia coli O45:K1 (strain S88 / ExPEC).